Reading from the N-terminus, the 119-residue chain is Basic phospholipase A2 homolog 1 (119 aa).

Cystine bridges form between Cys11–Cys72, Cys27–Cys118, Cys29–Cys45, Cys44–Cys99, Cys51–Cys92, Cys61–Cys85, and Cys79–Cys90. The tract at residues 107-117 (KENYNIDPKKR) is important for membrane-damaging activities in eukaryotes and bacteria; heparin-binding.

The protein belongs to the phospholipase A2 family. Group I subfamily. D49 sub-subfamily. Expressed by the venom gland.

The protein resides in the secreted. The chain is Basic phospholipase A2 homolog 1 from Notechis scutatus scutatus (Mainland tiger snake).